A 1049-amino-acid polypeptide reads, in one-letter code: Cellulose synthase A catalytic subunit 4 [UDP-forming] (1049 aa).

At 1–215 (MEPNTMASFD…ISSSKISPYR (215 aa)) the chain is on the cytoplasmic side. Residues Cys-23, Cys-26, Cys-42, Cys-45, Cys-50, Cys-53, Cys-65, and Cys-68 each coordinate Zn(2+). Residues 23–69 (CKVCGDEVKDDDNGQTFVACHVCVYPVCKPCYEYERSNGNKCCPQCN) form an RING-type; degenerate zinc finger. Residues 76–98 (KGSPKIAGDEENNGPDDSDDELN) form a disordered region. The segment covering 84–96 (DEENNGPDDSDDE) has biased composition (acidic residues). A Phosphoserine modification is found at Ser-135. The chain crosses the membrane as a helical span at residues 216-236 (IVIVLRLVILVFFFRFRILTP). The Extracellular portion of the chain corresponds to 237–239 (AKD). Residues 240–260 (AYPLWLISVICEIWFALSWIL) traverse the membrane as a helical segment. The Cytoplasmic segment spans residues 261 to 831 (DQFPKWFPIN…INTIVYPFTS (571 aa)). UDP-alpha-D-glucose contacts are provided by Ser-299, Lys-305, Glu-306, and Asp-335. Asp-335 is an active-site residue. The stretch at 389-416 (VKDRRAMKREYEEFKVRINALVAKAQKK) forms a coiled coil. Lys-476 lines the UDP-alpha-D-glucose pocket. Mn(2+) contacts are provided by Lys-477 and Asp-501. The active site involves Asp-748. A helical transmembrane segment spans residues 832–852 (IPLLAYCTIPAVCLLTGKFII). Residues 853–857 (PTINN) lie on the Extracellular side of the membrane. The helical transmembrane segment at 858–878 (FASIWFLALFLSIIATAILEL) threads the bilayer. Residues 879–895 (RWSGVSINDLWRNEQFW) lie on the Cytoplasmic side of the membrane. A helical membrane pass occupies residues 896–916 (VIGGVSAHLFAVFQGLLKVLF). Residues 917-945 (GVDTNFTVTSKGASDEADEFGDLYLFKWT) are Extracellular-facing. Residue Asn-921 is glycosylated (N-linked (GlcNAc...) asparagine). Residues 946 to 966 (TLLIPPTTLIILNMVGVVAGV) form a helical membrane-spanning segment. Residues 967–977 (SDAINNGYGSW) lie on the Cytoplasmic side of the membrane. The helical transmembrane segment at 978 to 998 (GPLFGKLFFAFWVIVHLYPFL) threads the bilayer. Residues 999–1007 (KGLMGRQNR) lie on the Extracellular side of the membrane. A helical membrane pass occupies residues 1008 to 1028 (TPTIVVLWSILLASIFSLVWV). The Cytoplasmic portion of the chain corresponds to 1029 to 1049 (RIDPFLPKQTGPLLKQCGVDC).

It belongs to the glycosyltransferase 2 family. Plant cellulose synthase subfamily. As to quaternary structure, interacts with CESA7 and CESA8. Assembly with CESA7 and CESA8 is required for functional complex and localization in secondary cell wall deposition sites. Interacts with STL1 and STL2, but not with GOT1. Requires Zn(2+) as cofactor. Mn(2+) serves as cofactor. Post-translationally, S-acylated. Confined to secondary cell wall developing tissues such as xylems and interfascicular regions. Expressed in roots, hypocotyls, leaves, inflorescences and flowers.

It localises to the cell membrane. The enzyme catalyses [(1-&gt;4)-beta-D-glucosyl](n) + UDP-alpha-D-glucose = [(1-&gt;4)-beta-D-glucosyl](n+1) + UDP + H(+). Its pathway is glycan metabolism; plant cellulose biosynthesis. In terms of biological role, catalytic subunit of cellulose synthase terminal complexes ('rosettes'), required for beta-1,4-glucan microfibril crystallization, a major mechanism of the cell wall formation. Involved in the secondary cell wall formation. Required for the xylem cell wall thickening. In Arabidopsis thaliana (Mouse-ear cress), this protein is Cellulose synthase A catalytic subunit 4 [UDP-forming].